Here is a 436-residue protein sequence, read N- to C-terminus: MSSRKSKSNSLIHTECLSQVQRILRERFCRQSPHSNLFGVQVQYKHLSELLKRTALHGESNSVLIIGPRGSGKTMLINHALKELMEIEEVSENVLQVHLNGLLQINDKIALKEITRQLNLENVVGDKVFGSFAENLSFLLEALKKGDRTSSCPVIFILDEFDLFAHHKNQTLLYNLFDISQSAQTPIAVIGLTCRLDILELLEKRVKSRFSHRQIHLMNSFGFPQYVKIFKEQLSLPAEFPDKVFAEKWNENVQYLSEDRSVQEVLQKHFNISKNLRSLHMLLMLALNRVTASHPFMTAVDLMEASQLCSMDSKANIVHGLSVLEICLIIAMKHLNDIYEEEPFNFQMVYNEFQKFVQRKAHSVYNFEKPVVMKAFEHLQQLELIKPMERTSGNSQREYQLMKLLLDNTQIMNALQKYPNCPTDVRQWATSSLSWL.

At Lys-7 the chain carries N6-methyllysine. Position 67-74 (67-74 (GPRGSGKT)) interacts with ATP.

This sequence belongs to the ORC4 family. As to quaternary structure, component of ORC, a complex composed of at least 6 subunits: ORC1, ORC2, ORC3, ORC4, ORC5 and ORC6. ORC is regulated in a cell-cycle dependent manner. It is sequentially assembled at the exit from anaphase of mitosis and disassembled as cells enter S phase. Interacts with DBF4. Interacts with POLQ.

It localises to the nucleus. Functionally, component of the origin recognition complex (ORC) that binds origins of replication. DNA-binding is ATP-dependent. The specific DNA sequences that define origins of replication have not been identified yet. ORC is required to assemble the pre-replication complex necessary to initiate DNA replication. Binds histone H3 and H4 trimethylation marks H3K9me3, H3K27me3 and H4K20me3. The polypeptide is Origin recognition complex subunit 4 (ORC4) (Homo sapiens (Human)).